We begin with the raw amino-acid sequence, 140 residues long: Putative pre-16S rRNA nuclease (140 aa).

This sequence belongs to the YqgF nuclease family.

It is found in the cytoplasm. Could be a nuclease involved in processing of the 5'-end of pre-16S rRNA. The chain is Putative pre-16S rRNA nuclease from Enterococcus faecalis (strain ATCC 700802 / V583).